The primary structure comprises 308 residues: Glutaminase (308 aa).

Residues S66, N117, E161, N168, Y192, Y244, and V262 each coordinate substrate.

It belongs to the glutaminase family. Homotetramer.

It carries out the reaction L-glutamine + H2O = L-glutamate + NH4(+). This Salmonella arizonae (strain ATCC BAA-731 / CDC346-86 / RSK2980) protein is Glutaminase.